The primary structure comprises 451 residues: FAD-dependent monooxygenase adrH (451 aa).

3 residues coordinate FAD: E39, G53, and R112. Y196 is an active-site residue. 2 residues coordinate FAD: D288 and A301. N385 is a glycosylation site (N-linked (GlcNAc...) asparagine). The chain crosses the membrane as a helical span at residues 426–446 (TLLWVSSLALFLFFPWLGSYL).

It belongs to the paxM FAD-dependent monooxygenase family. The cofactor is FAD.

It localises to the membrane. It functions in the pathway secondary metabolite biosynthesis; terpenoid biosynthesis. Functionally, FAD-dependent monooxygenase; part of the gene cluster that mediates the biosynthesis of andrastins, meroterpenoid compounds that exhibit inhibitory activity against ras farnesyltransferase, suggesting that they could be promising leads for antitumor agents. The first step of the pathway is the synthesis of 3,5-dimethylorsellinic acid (DMOA) by the polyketide synthase adrD via condensation of one acetyl-CoA starter unit with 3 malonyl-CoA units and 2 methylations. DMAO is then converted to farnesyl-DMAO by the prenyltransferase adrG. The methyltransferase adrK catalyzes the methylation of the carboxyl group of farnesyl-DMAO to farnesyl-DMAO methyl ester which is further converted to epoxyfarnesyl-DMAO methyl ester by the FAD-dependent monooxygenase adrH. The terpene cyclase adrI then catalyzes the carbon skeletal rearrangement to generate the andrastin E, the first compound in the pathway having the andrastin scaffold, with the tetracyclic ring system. The post-cyclization tailoring enzymes adrF, adrE, adrJ, and adrA, are involved in the conversion of andrastin E into andrastin A. The short chain dehydrogenase adrF is responsible for the oxidation of the C-3 a hydroxyl group of andrastin E to yield the corresponding ketone, andrastin D. The ketoreductase adrE stereoselectively reduces the carbonyl moiety to reverse the stereochemistry of the C-3 position to yield andrastin F. The acetyltransferase adrJ is the acetyltransferase that attaches the acetyl group to the C-3 hydroxyl group of andrastin F to yield andrastin C. Finally, the cytochrome P450 monooxygenase adrA catalyzes two sequential oxidation reactions of the C-23 methyl group, to generate the corresponding alcohol andrastin B, and aldehyde andrastin A. This chain is FAD-dependent monooxygenase adrH, found in Penicillium rubens (strain ATCC 28089 / DSM 1075 / NRRL 1951 / Wisconsin 54-1255) (Penicillium chrysogenum).